The following is a 674-amino-acid chain: Acetyl-coenzyme A synthetase (674 aa).

Residues 201 to 204 (RGGR) and threonine 320 contribute to the CoA site. Residues 396–398 (GEP), 420–425 (DTYWQT), aspartate 518, and arginine 533 each bind ATP. Serine 541 contacts CoA. Position 544 (arginine 544) interacts with ATP. CoA is bound at residue arginine 603.

This sequence belongs to the ATP-dependent AMP-binding enzyme family.

It catalyses the reaction acetate + ATP + CoA = acetyl-CoA + AMP + diphosphate. The sequence is that of Acetyl-coenzyme A synthetase (acsA) from Dictyostelium discoideum (Social amoeba).